We begin with the raw amino-acid sequence, 54 residues long: MRFQQFLFAFFIFIMSLLLISGQRPVNLTMRRKLRKHNCLQRRCMPLHSRVPFP.

A signal peptide spans 1-22 (MRFQQFLFAFFIFIMSLLLISG). Asn-27 carries an N-linked (GlcNAc...) asparagine glycan.

Belongs to the Elabela/Toddler family. In terms of assembly, interacts with APLNR. Expressed in the intima of blood vessels. Expressed in endothelial cells in blood vessels in the heart and lung. Expressed in cytotrophoblasts and syncytiotrophoblasts of first-trimester placental tissue and term placentas (at protein level). Not detected in smooth muscle cells or cardiomyocytes (at protein level). Expressed in kidney. Expressed in blood vessels. Expressed in embryonic (ESCs) and induced (iPSCs) pluripotent stem cells. Most highly expressed in undifferentiated embryonic stem cell and is rapidly down-regulated during differentiation.

Its subcellular location is the secreted. It localises to the extracellular space. Peptide hormone that functions as endogenous ligand for the G-protein-coupled apelin receptor (APLNR/APJ), that plays a role in the regulation of normal cardiovascular function and fluid homeostasis. Functions as a balanced agonist activating both G(i) protein pathway and beta-arrestin pathway of APLNR. Downstream G proteins activation, apelin can inhibit cAMP production and activate key intracellular effectors such as ERKs. On the other hand, APLNR activation induces beta-arrestin recruitment to the membrane leading to desensitization and internalization of the receptor. Required for mesendodermal differentiation, blood vessels formation and heart morphogenesis during early development and for adult cardiovascular homeostasis. Acts as a motogen by promoting mesendodermal cell migration during gastrulation by binding and activating APLNR. Acts as an early embryonic regulator of cellular movement with a role in migration and development of cardiac progenitor cells. May act as a chemoattractant for the activation of angioblast migration toward the embryonic midline, i.e. the position of the future vessel formation, during vasculogenesis. Positively regulates sinus venosus (SV)-derived endothelial cells migration into the developing heart to promote coronary blood vessel sprouting. Plays a role in placental vascular development; promotes placental trophoblast invasion and spiral artery remodeling in the uterus. Involved in the regulation of maternal cardiovascular homeostasis to prevent gestational hypertension and for potent cardioprotective functions during heart failure. Mediates myocardial contractility in an ERK1/2-dependent manner. In Homo sapiens (Human), this protein is Apelin receptor early endogenous ligand.